The primary structure comprises 94 residues: Small ribosomal subunit protein uS19 (94 aa).

The protein belongs to the universal ribosomal protein uS19 family.

Functionally, protein S19 forms a complex with S13 that binds strongly to the 16S ribosomal RNA. This chain is Small ribosomal subunit protein uS19, found in Nitrosomonas eutropha (strain DSM 101675 / C91 / Nm57).